We begin with the raw amino-acid sequence, 88 residues long: Small ribosomal subunit protein bS16 (88 aa).

Belongs to the bacterial ribosomal protein bS16 family.

The protein is Small ribosomal subunit protein bS16 of Mesomycoplasma hyopneumoniae (strain 232) (Mycoplasma hyopneumoniae).